A 284-amino-acid polypeptide reads, in one-letter code: 2,3,4,5-tetrahydropyridine-2,6-dicarboxylate N-succinyltransferase (284 aa).

2 residues coordinate substrate: R111 and D148.

The protein belongs to the transferase hexapeptide repeat family. Homotrimer.

The protein resides in the cytoplasm. The catalysed reaction is (S)-2,3,4,5-tetrahydrodipicolinate + succinyl-CoA + H2O = (S)-2-succinylamino-6-oxoheptanedioate + CoA. It participates in amino-acid biosynthesis; L-lysine biosynthesis via DAP pathway; LL-2,6-diaminopimelate from (S)-tetrahydrodipicolinate (succinylase route): step 1/3. This chain is 2,3,4,5-tetrahydropyridine-2,6-dicarboxylate N-succinyltransferase, found in Brucella suis (strain ATCC 23445 / NCTC 10510).